We begin with the raw amino-acid sequence, 271 residues long: Acyl-[acyl-carrier-protein]--UDP-N-acetylglucosamine O-acyltransferase (271 aa).

It belongs to the transferase hexapeptide repeat family. LpxA subfamily. In terms of assembly, homotrimer.

Its subcellular location is the cytoplasm. It catalyses the reaction a (3R)-hydroxyacyl-[ACP] + UDP-N-acetyl-alpha-D-glucosamine = a UDP-3-O-[(3R)-3-hydroxyacyl]-N-acetyl-alpha-D-glucosamine + holo-[ACP]. Its pathway is glycolipid biosynthesis; lipid IV(A) biosynthesis; lipid IV(A) from (3R)-3-hydroxytetradecanoyl-[acyl-carrier-protein] and UDP-N-acetyl-alpha-D-glucosamine: step 1/6. Functionally, involved in the biosynthesis of lipid A, a phosphorylated glycolipid that anchors the lipopolysaccharide to the outer membrane of the cell. This chain is Acyl-[acyl-carrier-protein]--UDP-N-acetylglucosamine O-acyltransferase, found in Sulfurihydrogenibium sp. (strain YO3AOP1).